Here is a 181-residue protein sequence, read N- to C-terminus: ATP synthase subunit b, chloroplastic (181 aa).

The chain crosses the membrane as a helical span at residues 27–49; sequence LATNPINLSVVLGVVIYFGKGVL.

The protein belongs to the ATPase B chain family. F-type ATPases have 2 components, F(1) - the catalytic core - and F(0) - the membrane proton channel. F(1) has five subunits: alpha(3), beta(3), gamma(1), delta(1), epsilon(1). F(0) has four main subunits: a(1), b(1), b'(1) and c(10-14). The alpha and beta chains form an alternating ring which encloses part of the gamma chain. F(1) is attached to F(0) by a central stalk formed by the gamma and epsilon chains, while a peripheral stalk is formed by the delta, b and b' chains.

It localises to the plastid. Its subcellular location is the chloroplast thylakoid membrane. F(1)F(0) ATP synthase produces ATP from ADP in the presence of a proton or sodium gradient. F-type ATPases consist of two structural domains, F(1) containing the extramembraneous catalytic core and F(0) containing the membrane proton channel, linked together by a central stalk and a peripheral stalk. During catalysis, ATP synthesis in the catalytic domain of F(1) is coupled via a rotary mechanism of the central stalk subunits to proton translocation. In terms of biological role, component of the F(0) channel, it forms part of the peripheral stalk, linking F(1) to F(0). This chain is ATP synthase subunit b, chloroplastic, found in Lemna minor (Common duckweed).